We begin with the raw amino-acid sequence, 1119 residues long: Period circadian protein homolog 3 (1119 aa).

The interval 1-48 (MDPCGNPAVPGGDCPQTRGPGLQGSSGQEGPLQGICVDSSHSEHEDRN) is disordered. The short motif at 54–63 (LIMVVQEMKK) is the Nuclear export signal 1 element. 2 consecutive PAS domains span residues 120–187 (LASE…PTQL) and 259–325 (YEAP…KVLK). The region spanning 334 to 377 (HSPIRFCTQNGDYVILDSSWSSFVNPWSRKVSFIIGRHKVRTSP) is the PAC domain. The short motif at 400–409 (LQEQIHRLLL) is the Nuclear export signal 3 element. Over residues 419–428 (GYGSLGSSGS) the composition is skewed to low complexity. Disordered stretches follow at residues 419–449 (GYGSLGSSGSQEQHISVTSSSESSGHCVEEA), 483–530 (VKPV…SSSY), 718–744 (HSRCAGSERRKHKRKKLPTPVDSSSSS), and 878–910 (LEPTPSDHGPRRVEENWETHSEEEHPFISSRSS). Polar residues-rich tracts occupy residues 429-442 (QEQHISVTSSSESS) and 491-515 (TEPQGSDEQKDFSSSQTLKNKSTDT). The CSNK1E binding domain stretch occupies residues 551–750 (LKRKCISCTN…SSSSAHLCPH (200 aa)). The Nuclear localization signal motif lies at 720-739 (RCAGSERRKHKRKKLPTPVD). Over residues 885 to 903 (HGPRRVEENWETHSEEEHP) the composition is skewed to basic and acidic residues. The residue at position 907 (Ser907) is a Phosphoserine. Positions 913 to 920 (LQLNLLQE) match the Nuclear export signal 2 motif. The tract at residues 947-1011 (GNSGSRSPPC…QDTHRDRAFS (65 aa)) is disordered. Residues 970–988 (SPSAAASGSSASSVHGSGS) are compositionally biased toward low complexity. Residues 989 to 1001 (DYTSEVSENGQRS) show a composition bias toward polar residues. Residues 1037-1119 (ERGRDTVLRE…VQQKTPVEQL (83 aa)) are CRY binding domain.

Homodimer. Component of the circadian core oscillator, which includes the CRY proteins, CLOCK or NPAS2, BMAL1 or BMAL2, CSNK1D and/or CSNK1E, TIMELESS and the PER proteins. Interacts directly with PER1, PER2, CRY1, CRY2, and TIMELESS; interaction with CRY1 and CRY2 is weak and not rhythmic. Interacts with FBXW11 and BTRC. Phosphorylation by CSNK1E is weak and appears to require association with PER1 and translocation to the nucleus. In terms of processing, ubiquitinated.

It is found in the cytoplasm. The protein localises to the nucleus. Originally described as a core component of the circadian clock. The circadian clock, an internal time-keeping system, regulates various physiological processes through the generation of approximately 24 hour circadian rhythms in gene expression, which are translated into rhythms in metabolism and behavior. It is derived from the Latin roots 'circa' (about) and 'diem' (day) and acts as an important regulator of a wide array of physiological functions including metabolism, sleep, body temperature, blood pressure, endocrine, immune, cardiovascular, and renal function. Consists of two major components: the central clock, residing in the suprachiasmatic nucleus (SCN) of the brain, and the peripheral clocks that are present in nearly every tissue and organ system. Both the central and peripheral clocks can be reset by environmental cues, also known as Zeitgebers (German for 'timegivers'). The predominant Zeitgeber for the central clock is light, which is sensed by retina and signals directly to the SCN. The central clock entrains the peripheral clocks through neuronal and hormonal signals, body temperature and feeding-related cues, aligning all clocks with the external light/dark cycle. Circadian rhythms allow an organism to achieve temporal homeostasis with its environment at the molecular level by regulating gene expression to create a peak of protein expression once every 24 hours to control when a particular physiological process is most active with respect to the solar day. Transcription and translation of core clock components (CLOCK, NPAS2, BMAL1, BMAL2, PER1, PER2, PER3, CRY1 and CRY2) plays a critical role in rhythm generation, whereas delays imposed by post-translational modifications (PTMs) are important for determining the period (tau) of the rhythms (tau refers to the period of a rhythm and is the length, in time, of one complete cycle). A diurnal rhythm is synchronized with the day/night cycle, while the ultradian and infradian rhythms have a period shorter and longer than 24 hours, respectively. Disruptions in the circadian rhythms contribute to the pathology of cardiovascular diseases, cancer, metabolic syndromes and aging. A transcription/translation feedback loop (TTFL) forms the core of the molecular circadian clock mechanism. Transcription factors, CLOCK or NPAS2 and BMAL1 or BMAL2, form the positive limb of the feedback loop, act in the form of a heterodimer and activate the transcription of core clock genes and clock-controlled genes (involved in key metabolic processes), harboring E-box elements (5'-CACGTG-3') within their promoters. The core clock genes: PER1/2/3 and CRY1/2 which are transcriptional repressors form the negative limb of the feedback loop and interact with the CLOCK|NPAS2-BMAL1|BMAL2 heterodimer inhibiting its activity and thereby negatively regulating their own expression. This heterodimer also activates nuclear receptors NR1D1, NR1D2, RORA, RORB and RORG, which form a second feedback loop and which activate and repress BMAL1 transcription, respectively. Has a redundant role with the other PER proteins PER1 and PER2 and is not essential for the circadian rhythms maintenance. In contrast, plays an important role in sleep-wake timing and sleep homeostasis probably through the transcriptional regulation of sleep homeostasis-related genes, without influencing circadian parameters. Can bind heme. This Rattus norvegicus (Rat) protein is Period circadian protein homolog 3 (Per3).